The sequence spans 494 residues: UPF0371 protein M6_Spy1067 (494 aa).

Belongs to the UPF0371 family.

This Streptococcus pyogenes serotype M6 (strain ATCC BAA-946 / MGAS10394) protein is UPF0371 protein M6_Spy1067.